The following is a 463-amino-acid chain: Retinoic acid receptor RXR-gamma (463 aa).

The modulating stretch occupies residues 1-138 (MYGNYSHFMK…TSPGSLVKHI (138 aa)). The disordered stretch occupies residues 17 to 53 (GSPGHSGSTSMSPSAALSTGKPMDSHPSYTDTPVSAP). Residues 21-33 (HSGSTSMSPSAAL) show a composition bias toward polar residues. NR C4-type zinc fingers lie at residues 139–159 (CAIC…CEGC) and 175–199 (CRDN…YQKC). Positions 139–204 (CAICGDRSSG…RYQKCLVMGM (66 aa)) form a DNA-binding region, nuclear receptor. Residues 205–230 (KREAVQEERQRSRERAESEAECASSG) are hinge. Residues 211-222 (EERQRSRERAES) show a composition bias toward basic and acidic residues. The tract at residues 211-232 (EERQRSRERAESEAECASSGHE) is disordered. The NR LBD domain maps to 231-459 (HEDMPVERIL…TFLMEMLETP (229 aa)).

The protein belongs to the nuclear hormone receptor family. NR2 subfamily. As to quaternary structure, homodimer. Heterodimer with a RAR molecule. Binds DNA preferentially as a RAR/RXR heterodimer. Interacts with RARA. Acetylated by EP300.

The protein resides in the nucleus. The protein localises to the cytoplasm. Receptor for retinoic acid. Retinoic acid receptors bind as heterodimers to their target response elements in response to their ligands, all-trans or 9-cis retinoic acid, and regulate gene expression in various biological processes. The RAR/RXR heterodimers bind to the retinoic acid response elements (RARE) composed of tandem 5'-AGGTCA-3' sites known as DR1-DR5. The high affinity ligand for RXRs is 9-cis retinoic acid. The chain is Retinoic acid receptor RXR-gamma (RXRG) from Sus scrofa (Pig).